The sequence spans 78 residues: uncharacterized protein (78 aa).

This is an uncharacterized protein from Ureaplasma parvum serovar 3 (strain ATCC 700970).